The sequence spans 482 residues: tRNA sulfurtransferase (482 aa).

Positions 61 to 165 (LAIRDALTRI…DDRLLLIKGR (105 aa)) constitute a THUMP domain. ATP contacts are provided by residues 183 to 184 (LI), Lys-265, Gly-287, and Gln-296. The cysteines at positions 344 and 456 are disulfide-linked. In terms of domain architecture, Rhodanese spans 404–482 (FGPNDVILDI…GFNNVKVYRP (79 aa)). Catalysis depends on Cys-456, which acts as the Cysteine persulfide intermediate.

It belongs to the ThiI family.

The protein resides in the cytoplasm. The catalysed reaction is [ThiI sulfur-carrier protein]-S-sulfanyl-L-cysteine + a uridine in tRNA + 2 reduced [2Fe-2S]-[ferredoxin] + ATP + H(+) = [ThiI sulfur-carrier protein]-L-cysteine + a 4-thiouridine in tRNA + 2 oxidized [2Fe-2S]-[ferredoxin] + AMP + diphosphate. The enzyme catalyses [ThiS sulfur-carrier protein]-C-terminal Gly-Gly-AMP + S-sulfanyl-L-cysteinyl-[cysteine desulfurase] + AH2 = [ThiS sulfur-carrier protein]-C-terminal-Gly-aminoethanethioate + L-cysteinyl-[cysteine desulfurase] + A + AMP + 2 H(+). It functions in the pathway cofactor biosynthesis; thiamine diphosphate biosynthesis. Functionally, catalyzes the ATP-dependent transfer of a sulfur to tRNA to produce 4-thiouridine in position 8 of tRNAs, which functions as a near-UV photosensor. Also catalyzes the transfer of sulfur to the sulfur carrier protein ThiS, forming ThiS-thiocarboxylate. This is a step in the synthesis of thiazole, in the thiamine biosynthesis pathway. The sulfur is donated as persulfide by IscS. This is tRNA sulfurtransferase from Shigella sonnei (strain Ss046).